We begin with the raw amino-acid sequence, 185 residues long: Peptide deformylase (185 aa).

2 residues coordinate Fe cation: cysteine 109 and histidine 152. The active site involves glutamate 153. Fe cation is bound at residue histidine 156.

This sequence belongs to the polypeptide deformylase family. The cofactor is Fe(2+).

The enzyme catalyses N-terminal N-formyl-L-methionyl-[peptide] + H2O = N-terminal L-methionyl-[peptide] + formate. Removes the formyl group from the N-terminal Met of newly synthesized proteins. Requires at least a dipeptide for an efficient rate of reaction. N-terminal L-methionine is a prerequisite for activity but the enzyme has broad specificity at other positions. The polypeptide is Peptide deformylase (Roseiflexus castenholzii (strain DSM 13941 / HLO8)).